A 150-amino-acid polypeptide reads, in one-letter code: Large ribosomal subunit protein bL9 (150 aa).

The protein belongs to the bacterial ribosomal protein bL9 family.

Its function is as follows. Binds to the 23S rRNA. The chain is Large ribosomal subunit protein bL9 from Idiomarina loihiensis (strain ATCC BAA-735 / DSM 15497 / L2-TR).